Here is a 658-residue protein sequence, read N- to C-terminus: MFQNNPLLSQLKQQIRDSKQQVEGIVKGSDKAFGFLECDKKSYFIPPAAMKKVMHGDKIKALIEVVGEKEQAEPDALIEPMLTRFIARVRFNKDKKLQVLVDHPQINQAIGAAQDKSITETLQEGDWVVATLKTHPLRDDRFFFAQIQQFICRAEDELAPWWVTLARHGQSRYPVQGCADYPMIDQHTREDLTALHFITIDAETTLDMDDALYLEPIHQAEEQIGWRLVVAVADPTAYIPLDSQIEQEARQRCFTNYLPGFNIPMLPPELSDERCSLMQDEIRPALVCYIETDLTGNITEKPRFVSAYVQSKAKLAYDHVSDYLENCLDAWQPENPQIAQQIQWLHQFTQARIEWRKQHALLFKEKPDYSFILAENGSVQAIQAQYRRIANQMVEECMILANICAAHYLDEHAKCGIFNTHSGFDKKYLESAHQFLLNQLSDETNQAVLATRYSVANLTTLAGYCQMRHDIELLNSDYLELRLRRFLTFAEFKSEIAPHFGLGLSGYATWTSPIRKYSDMVNHRLIKAVLTQQTCEKPQDDLFVRLQEARRQNRLVERDIADWLYCRYLATQVEQKPTFQAEIQDVMRGGLRVQLLANGAPMFIPASLIHDNKEAIQVNTDTLTLSIQGEVKYKLGDIIQVQLLDVKEETRSIVGTLC.

Positions 189–531 (REDLTALHFI…NHRLIKAVLT (343 aa)) constitute an RNB domain. Residues 576-658 (KPTFQAEIQD…ETRSIVGTLC (83 aa)) enclose the S1 motif domain.

The protein belongs to the RNR ribonuclease family. RNase II subfamily.

It is found in the cytoplasm. It catalyses the reaction Exonucleolytic cleavage in the 3'- to 5'-direction to yield nucleoside 5'-phosphates.. Functionally, involved in mRNA degradation. Hydrolyzes single-stranded polyribonucleotides processively in the 3' to 5' direction. The chain is Exoribonuclease 2 from Pasteurella multocida (strain Pm70).